A 179-amino-acid polypeptide reads, in one-letter code: Small ribosomal subunit protein uS5 (179 aa).

One can recognise an S5 DRBM domain in the interval 22–85 (MIEKLVAVNR…EYARKRMANV (64 aa)).

The protein belongs to the universal ribosomal protein uS5 family. Part of the 30S ribosomal subunit. Contacts proteins S4 and S8.

Its function is as follows. With S4 and S12 plays an important role in translational accuracy. In terms of biological role, located at the back of the 30S subunit body where it stabilizes the conformation of the head with respect to the body. This chain is Small ribosomal subunit protein uS5, found in Xylella fastidiosa (strain M12).